The primary structure comprises 466 residues: tRNA-2-methylthio-N(6)-dimethylallyladenosine synthase (466 aa).

Residues 21-137 form the MTTase N-terminal domain; sequence GSYWITTFGC…LEDLLNQVDN (117 aa). [4Fe-4S] cluster contacts are provided by Cys-30, Cys-66, Cys-100, Cys-172, Cys-176, and Cys-179. The Radical SAM core domain occupies 158–395; that stretch reads RDSNICAWVN…NLLVEQTAKD (238 aa). In terms of domain architecture, TRAM spans 398 to 466; it reads TRYHNQIVEV…AFSLTGSPIQ (69 aa).

It belongs to the methylthiotransferase family. MiaB subfamily. In terms of assembly, monomer. [4Fe-4S] cluster is required as a cofactor.

It is found in the cytoplasm. The enzyme catalyses N(6)-dimethylallyladenosine(37) in tRNA + (sulfur carrier)-SH + AH2 + 2 S-adenosyl-L-methionine = 2-methylsulfanyl-N(6)-dimethylallyladenosine(37) in tRNA + (sulfur carrier)-H + 5'-deoxyadenosine + L-methionine + A + S-adenosyl-L-homocysteine + 2 H(+). Functionally, catalyzes the methylthiolation of N6-(dimethylallyl)adenosine (i(6)A), leading to the formation of 2-methylthio-N6-(dimethylallyl)adenosine (ms(2)i(6)A) at position 37 in tRNAs that read codons beginning with uridine. This Prochlorococcus marinus (strain SARG / CCMP1375 / SS120) protein is tRNA-2-methylthio-N(6)-dimethylallyladenosine synthase.